Here is a 208-residue protein sequence, read N- to C-terminus: Outer-membrane lipoprotein carrier protein (208 aa).

An N-terminal signal peptide occupies residues 1 to 22 (MKKRLCAVLLASPLLFSAAVFA).

The protein belongs to the LolA family. Monomer.

It is found in the periplasm. Functionally, participates in the translocation of lipoproteins from the inner membrane to the outer membrane. Only forms a complex with a lipoprotein if the residue after the N-terminal Cys is not an aspartate (The Asp acts as a targeting signal to indicate that the lipoprotein should stay in the inner membrane). This Shewanella baltica (strain OS223) protein is Outer-membrane lipoprotein carrier protein.